We begin with the raw amino-acid sequence, 362 residues long: MPLPTYDPADYPTQLATKVAHFEQNFAPFGVANTAIHASAPLHYRMRAEFRIWHEGDDLNYAMFDPADPKQPITLETFPPAAESICHLMPRLRDKLRGNESLRRRLFQADFLATLSGEMLVTLIYHRQLDEAWEAAAREMAAELGIGLIGRSRGQKIVLDRDWVLEGFELNGRQLRYKQVEGSFTQPNGGVNRQMLGWACQQAAGFGGNLVELYCGNGNFTIALSPLFERVLATEVSKSSVHAAQYNLAANQVENVALVRMSSEEFSNALAGREEFQRLKDIDLEPFRHATLFVDPPRSGLDAVTLELARGFDRILYISCNQETLRENVIALQDTHEIKASAVFDQFPYTHHLECGLLLTRR.

S-adenosyl-L-methionine contacts are provided by Gln186, Tyr214, Asn219, Glu235, and Asp295. Catalysis depends on Cys320, which acts as the Nucleophile. The active-site Proton acceptor is Glu354.

The protein belongs to the class I-like SAM-binding methyltransferase superfamily. RNA M5U methyltransferase family. TrmA subfamily.

The enzyme catalyses uridine(54) in tRNA + S-adenosyl-L-methionine = 5-methyluridine(54) in tRNA + S-adenosyl-L-homocysteine + H(+). It carries out the reaction uridine(341) in tmRNA + S-adenosyl-L-methionine = 5-methyluridine(341) in tmRNA + S-adenosyl-L-homocysteine + H(+). Functionally, dual-specificity methyltransferase that catalyzes the formation of 5-methyluridine at position 54 (m5U54) in all tRNAs, and that of position 341 (m5U341) in tmRNA (transfer-mRNA). This is tRNA/tmRNA (uracil-C(5))-methyltransferase from Dechloromonas aromatica (strain RCB).